The following is a 1537-amino-acid chain: Dicer-like protein 1 (1537 aa).

The disordered stretch occupies residues 38–68 (SDPAESSVDVQDEHSSDDSDNENEVFPKQND). In terms of domain architecture, Helicase ATP-binding spans 133–314 (LFERAKTQNT…EAATRLETFL (182 aa)). An ATP-binding site is contributed by 146–153 (LDTGSGKT). The DEAH box motif lies at 259–262 (DEAH). In terms of domain architecture, Helicase C-terminal spans 459–618 (ELSKHFNDTT…EILPEDRILH (160 aa)). The Dicer dsRNA-binding fold domain maps to 651–741 (AIAILARYAS…NSIYHRRLPA (91 aa)). The region spanning 891–1019 (DTVSFVHNND…ICAEPLRISA (129 aa)) is the PAZ domain. RNase III domains follow at residues 1043–1202 (IALE…LSGG) and 1253–1405 (ARHV…VDSK). Positions 1294, 1391, and 1394 each coordinate Mg(2+). The DRBM domain occupies 1439-1507 (TFLHNKLTNE…SEKALAVLDG (69 aa)). Zn(2+) contacts are provided by C1451, H1478, C1519, and C1521.

This sequence belongs to the helicase family. Dicer subfamily. The cofactor is Mg(2+). Mn(2+) serves as cofactor.

In terms of biological role, dicer-like endonuclease involved in cleaving double-stranded RNA in the RNA interference (RNAi) pathway. Produces 21 to 25 bp dsRNAs (siRNAs) which target the selective destruction of homologous RNAs leading to sequence-specific suppression of gene expression, called post-transcriptional gene silencing (PTGS). Part of a broad host defense response against viral infection and transposons. The sequence is that of Dicer-like protein 1 (dcl1) from Aspergillus fumigatus (strain ATCC MYA-4609 / CBS 101355 / FGSC A1100 / Af293) (Neosartorya fumigata).